A 122-amino-acid polypeptide reads, in one-letter code: Immunoglobulin lambda variable 8-61 (122 aa).

Residues 1 to 24 (MSVPTMAWMMLLLGLLAYGSGVDS) form the signal peptide. The tract at residues 25 to 49 (QTVVTQEPSFSVSPGGTVTLTCGLS) is framework-1. The Ig-like domain occupies 25–122 (QTVVTQEPSF…YCVLYMGSGI (98 aa)). Cysteines 46 and 114 form a disulfide. Positions 50–58 (SGSVSTSYY) are complementarity-determining-1. Residues 59-75 (PSWYQQTPGQAPRTLIY) form a framework-2 region. Residues 76 to 78 (STN) are complementarity-determining-2. The tract at residues 79–114 (TRSSGVPDRFSGSILGNKAALTITGAQADDESDYYC) is framework-3. Positions 115 to 122 (VLYMGSGI) are complementarity-determining-3.

In terms of assembly, immunoglobulins are composed of two identical heavy chains and two identical light chains; disulfide-linked.

The protein localises to the secreted. The protein resides in the cell membrane. In terms of biological role, v region of the variable domain of immunoglobulin light chains that participates in the antigen recognition. Immunoglobulins, also known as antibodies, are membrane-bound or secreted glycoproteins produced by B lymphocytes. In the recognition phase of humoral immunity, the membrane-bound immunoglobulins serve as receptors which, upon binding of a specific antigen, trigger the clonal expansion and differentiation of B lymphocytes into immunoglobulins-secreting plasma cells. Secreted immunoglobulins mediate the effector phase of humoral immunity, which results in the elimination of bound antigens. The antigen binding site is formed by the variable domain of one heavy chain, together with that of its associated light chain. Thus, each immunoglobulin has two antigen binding sites with remarkable affinity for a particular antigen. The variable domains are assembled by a process called V-(D)-J rearrangement and can then be subjected to somatic hypermutations which, after exposure to antigen and selection, allow affinity maturation for a particular antigen. This is Immunoglobulin lambda variable 8-61 from Homo sapiens (Human).